The primary structure comprises 1069 residues: Thyrotropin-releasing hormone-degrading ectoenzyme (1069 aa).

Positions 1 to 11 (MALDGELGEQE) are enriched in acidic residues. Residues 1 to 46 (MALDGELGEQEEEKKKKKKKKRKKKKEEEEEEEGAEKSSSPFAAAM) form a disordered region. Topologically, residues 1 to 85 (MALDGELGEQ…ERHIAVHKRL (85 aa)) are cytoplasmic. The segment covering 15-25 (KKKKKKKRKKK) has biased composition (basic residues). The chain crosses the membrane as a helical; Signal-anchor for type II membrane protein span at residues 86–106 (VLAFAVSLVALLAVTMLAVLL). At 107–1069 (SLRFDECGAS…FQWLGKALRH (963 aa)) the chain is on the extracellular side. The tract at residues 117–179 (ATPGADGGPS…PSEEEREPWE (63 aa)) is disordered. Positions 121–136 (ADGGPSGFPERGGNGS) are enriched in gly residues. N-linked (GlcNAc...) asparagine glycans are attached at residues asparagine 134, asparagine 205, asparagine 220, asparagine 267, and asparagine 383. 449-453 (AAMEN) contacts substrate. Histidine 485 provides a ligand contact to Zn(2+). The active-site Proton acceptor is glutamate 486. Residues histidine 489 and glutamate 508 each contribute to the Zn(2+) site. 7 N-linked (GlcNAc...) asparagine glycosylation sites follow: asparagine 650, asparagine 679, asparagine 694, asparagine 708, asparagine 729, asparagine 845, and asparagine 951.

The protein belongs to the peptidase M1 family. As to quaternary structure, homodimer; disulfide-linked. It depends on Zn(2+) as a cofactor. As to expression, predominantly expressed in brain.

It localises to the membrane. It catalyses the reaction Release of the N-terminal pyroglutamyl group from pGlu-|-His-Xaa tripeptides and pGlu-|-His-Xaa-Gly tetrapeptides.. Specific inactivation of TRH after its release. The sequence is that of Thyrotropin-releasing hormone-degrading ectoenzyme (TRHDE) from Homo sapiens (Human).